The sequence spans 142 residues: MFQGASALTLDAKGRMSVPSRYREALQGQAEGRVTVTKHPDGCLLLFPRPEWEVFRAKIAALPMDAHWWRRIFLGNAMDVDLDSAGRILVSPELRMAAGLEKEVMLLGMGSHFELWDAQTYTAKEQAAMAQGMPEALKNFTF.

2 SpoVT-AbrB domains span residues 5 to 51 (ASAL…PRPE) and 77 to 120 (AMDV…DAQT).

Belongs to the MraZ family. As to quaternary structure, forms oligomers.

It is found in the cytoplasm. It localises to the nucleoid. This chain is Transcriptional regulator MraZ, found in Burkholderia mallei (strain NCTC 10247).